A 58-amino-acid chain; its full sequence is DNA-directed RNA polymerases I, II, and III subunit RPABC4 (58 aa).

The Zn(2+) site is built by C19, C22, C36, and C39. The segment at 19 to 39 (CGECHTENEIKSRDPIRCREC) adopts a C4-type zinc-finger fold.

Belongs to the archaeal Rpo12/eukaryotic RPC10 RNA polymerase subunit family. In terms of assembly, component of the RNA polymerase I (Pol I), RNA polymerase II (Pol II) and RNA polymerase III (Pol III) complexes consisting of at least 13, 12 and 17 subunits, respectively. Pol I complex consists of a ten-subunit catalytic core composed of POLR1A/RPA1, POLR1B/RPA2, POLR1C/RPAC1, POLR1D/RPAC2, POLR1H/RPA12, POLR2E/RPABC1, POLR2F/RPABC2, POLR2H/RPABC3, POLR2K/RPABC4 and POLR2L/RPABC5; a mobile stalk subunit POLR1F/RPA43 protruding from the core and additional subunits homologous to general transcription factors POLR1E/RPA49 and POLR1G/RPA34. Part of Pol I pre-initiation complex (PIC), in which Pol I core assembles with RRN3 and promoter-bound UTBF and SL1/TIF-IB complex. Pol II complex contains a ten-subunit catalytic core composed of POLR2A/RPB1, POLR2B/RPB2, POLR2C/RPB3, POLR2I/RPB9, POLR2J/RPB11, POLR2E/RPABC1, POLR2F/RPABC2, POLR2H/RPABC3, POLR2K/RPABC4 and POLR2L/RPABC5 and a mobile stalk composed of two subunits POLR2D/RPB4 and POLR2G/RPB7. Part of Pol II(G) complex, in which Pol II core associates with an additional subunit POLR2M; unlike conventional Pol II, Pol II(G) functions as a transcriptional repressor. Part of TBP-based Pol II pre-initiation complex (PIC), in which Pol II core assembles with general transcription factors and other specific initiation factors including GTF2E1, GTF2E2, GTF2F1, GTF2F2, TCEA1, ERCC2, ERCC3, GTF2H2, GTF2H3, GTF2H4, GTF2H5, GTF2A1, GTF2A2, GTF2B and TBP; this large multi-subunit PIC complex mediates DNA unwinding and targets Pol II core to the transcription start site where the first phosphodiester bond forms. Pol III complex consists of a ten-subunit catalytic core composed of POLR3A/RPC1, POLR3B/RPC2, POLR1C/RPAC1, POLR1D/RPAC2, POLR3K/RPC10, POLR2E/RPABC1, POLR2F/RPABC2, POLR2H/RPABC3, POLR2K/RPABC4 and POLR2L/RPABC5; a mobile stalk composed of two subunits POLR3H/RPC8 and CRCP/RPC9, protruding from the core and functioning primarily in transcription initiation; and additional subunits homologous to general transcription factors of the RNA polymerase II machinery, POLR3C/RPC3-POLR3F/RPC6-POLR3G/RPC7 heterotrimer required for transcription initiation and POLR3D/RPC4-POLR3E/RPC5 heterodimer involved in both transcription initiation and termination.

Its subcellular location is the nucleus. It localises to the nucleolus. DNA-dependent RNA polymerase catalyzes the transcription of DNA into RNA using the four ribonucleoside triphosphates as substrates. Common component of RNA polymerases I, II and III which synthesize ribosomal RNA precursors, mRNA precursors and many functional non-coding RNAs, and a small RNAs, such as 5S rRNA and tRNAs, respectively. This chain is DNA-directed RNA polymerases I, II, and III subunit RPABC4 (Polr2k), found in Mus musculus (Mouse).